Consider the following 1403-residue polypeptide: DNA-directed RNA polymerase subunit beta' (1403 aa).

Cysteine 70, cysteine 72, cysteine 85, and cysteine 88 together coordinate Zn(2+). The Mg(2+) site is built by aspartate 461, aspartate 463, and aspartate 465. Positions 816, 890, 897, and 900 each coordinate Zn(2+).

Belongs to the RNA polymerase beta' chain family. The RNAP catalytic core consists of 2 alpha, 1 beta, 1 beta' and 1 omega subunit. When a sigma factor is associated with the core the holoenzyme is formed, which can initiate transcription. The cofactor is Mg(2+). Zn(2+) is required as a cofactor.

The enzyme catalyses RNA(n) + a ribonucleoside 5'-triphosphate = RNA(n+1) + diphosphate. Functionally, DNA-dependent RNA polymerase catalyzes the transcription of DNA into RNA using the four ribonucleoside triphosphates as substrates. The sequence is that of DNA-directed RNA polymerase subunit beta' from Dechloromonas aromatica (strain RCB).